A 235-amino-acid chain; its full sequence is Lipoprotein-releasing system ATP-binding protein LolD (235 aa).

In terms of domain architecture, ABC transporter spans 5 to 235; sequence LECRDIRKVY…LMTESASVEG (231 aa). Position 41–48 (41–48) interacts with ATP; that stretch reads GSSGSGKS.

It belongs to the ABC transporter superfamily. Lipoprotein translocase (TC 3.A.1.125) family. As to quaternary structure, the complex is composed of two ATP-binding proteins (LolD) and two transmembrane proteins (LolC and LolE).

The protein localises to the cell inner membrane. Its function is as follows. Part of the ABC transporter complex LolCDE involved in the translocation of mature outer membrane-directed lipoproteins, from the inner membrane to the periplasmic chaperone, LolA. Responsible for the formation of the LolA-lipoprotein complex in an ATP-dependent manner. The protein is Lipoprotein-releasing system ATP-binding protein LolD of Vibrio parahaemolyticus serotype O3:K6 (strain RIMD 2210633).